Consider the following 175-residue polypeptide: MSSAATNHPFSVPRYPSGQTCPAASEHLLVTQGAGQEERDALAAQLGKVRITHLALPDFPSVADLQLVLSTTLKDARVGLRLDLRGDEAFVWPLHALARAAGLLADEIFMSSSPEGTRLVFCVHCATCQPATSAGHLTCTQCGVMLEVRRHFSQRLGAYLGVCADADQPYQGVQP.

The heme-dependent oxidative N-demethylase (HODM) is a heterotetramer composed of a catalytic alpha subunit, a FMN/2Fe-2S-dependent oxidoreductase beta subunit, a gamma subunit with putative aminotransferase activity, and a delta subunit of unknown function.

Functionally, component of the heme-dependent oxidative N-demethylase (HODM) enzyme, that catalyzes the NADPH-dependent oxidation of dimethylamine (DMA) to methylamine (MA) and formaldehyde. Functions in bacterial methylated amine catabolism, linking alkylamine oxidation to the tetrahydrofolate C1 pool. The function of the delta subunit is unknown. In Ectopseudomonas mendocina (strain ymp) (Pseudomonas mendocina), this protein is Heme-dependent oxidative N-demethylase delta subunit.